The following is a 465-amino-acid chain: Argininosuccinate lyase (465 aa).

This sequence belongs to the lyase 1 family. Argininosuccinate lyase subfamily.

The protein resides in the cytoplasm. It catalyses the reaction 2-(N(omega)-L-arginino)succinate = fumarate + L-arginine. The protein operates within amino-acid biosynthesis; L-arginine biosynthesis; L-arginine from L-ornithine and carbamoyl phosphate: step 3/3. The sequence is that of Argininosuccinate lyase from Methanosphaera stadtmanae (strain ATCC 43021 / DSM 3091 / JCM 11832 / MCB-3).